Reading from the N-terminus, the 344-residue chain is MEKIYYDADISIQPLADKRIAVIGYGSQGHAHAQNLRDSGFDVVIGLRPGSSWAKAEADGFRVMAVGEAVEESDVIMILLPDERQPAVYEREIRPYLTAGKALAFAHGFNIHFSQIQPPKDVDVFMVAPKGPGHLVRRVYEAGGGVPALIAVHQDASGQAKDLALAYARGIGAGRAGILTTTFREETETDLFGEQAVLCGGLSALIKAGFETLVEAGYQPEIAYFECLHEMKLIVDLIYEGGLEYMRYSISDTAQWGDFTSGPRIINEETKKEMRRILADIQSGAFAKSWILENQANRPMFNAINRRELEHPIEVVGRKLRSMMPFIKAKRPGDDRVPATADRA.

In terms of domain architecture, KARI N-terminal Rossmann spans 2–181 (EKIYYDADIS…GAGRAGILTT (180 aa)). Residues 25–28 (YGSQ), Arg48, Ser52, and 82–85 (DERQ) each bind NADP(+). His107 is an active-site residue. Gly133 serves as a coordination point for NADP(+). In terms of domain architecture, KARI C-terminal knotted spans 182 to 327 (TFREETETDL…RKLRSMMPFI (146 aa)). Mg(2+) is bound by residues Asp190, Glu194, Glu226, and Glu230. Ser251 contacts substrate.

Belongs to the ketol-acid reductoisomerase family. It depends on Mg(2+) as a cofactor.

It carries out the reaction (2R)-2,3-dihydroxy-3-methylbutanoate + NADP(+) = (2S)-2-acetolactate + NADPH + H(+). The enzyme catalyses (2R,3R)-2,3-dihydroxy-3-methylpentanoate + NADP(+) = (S)-2-ethyl-2-hydroxy-3-oxobutanoate + NADPH + H(+). It participates in amino-acid biosynthesis; L-isoleucine biosynthesis; L-isoleucine from 2-oxobutanoate: step 2/4. It functions in the pathway amino-acid biosynthesis; L-valine biosynthesis; L-valine from pyruvate: step 2/4. In terms of biological role, involved in the biosynthesis of branched-chain amino acids (BCAA). Catalyzes an alkyl-migration followed by a ketol-acid reduction of (S)-2-acetolactate (S2AL) to yield (R)-2,3-dihydroxy-isovalerate. In the isomerase reaction, S2AL is rearranged via a Mg-dependent methyl migration to produce 3-hydroxy-3-methyl-2-ketobutyrate (HMKB). In the reductase reaction, this 2-ketoacid undergoes a metal-dependent reduction by NADPH to yield (R)-2,3-dihydroxy-isovalerate. This is Ketol-acid reductoisomerase (NADP(+)) from Alicyclobacillus acidocaldarius subsp. acidocaldarius (strain ATCC 27009 / DSM 446 / BCRC 14685 / JCM 5260 / KCTC 1825 / NBRC 15652 / NCIMB 11725 / NRRL B-14509 / 104-IA) (Bacillus acidocaldarius).